The following is a 230-amino-acid chain: Ribose-5-phosphate isomerase A (230 aa).

Substrate contacts are provided by residues 31-34 (TGST), 88-91 (DGSD), and 101-104 (KGGG). The active-site Proton acceptor is the glutamate 110. Position 128 (lysine 128) interacts with substrate.

Belongs to the ribose 5-phosphate isomerase family. In terms of assembly, homodimer.

The enzyme catalyses aldehydo-D-ribose 5-phosphate = D-ribulose 5-phosphate. Its pathway is carbohydrate degradation; pentose phosphate pathway; D-ribose 5-phosphate from D-ribulose 5-phosphate (non-oxidative stage): step 1/1. Catalyzes the reversible conversion of ribose-5-phosphate to ribulose 5-phosphate. This Lactobacillus acidophilus (strain ATCC 700396 / NCK56 / N2 / NCFM) protein is Ribose-5-phosphate isomerase A.